Here is a 274-residue protein sequence, read N- to C-terminus: Protein A11 homolog (274 aa).

Residues 106 to 136 (DDNKRVHLLEQEIAELRKKKTKSKNLLDFTN) adopt a coiled-coil conformation.

It belongs to the poxviridae A11 family. Homomultimer. Interacts with A32. Post-translationally, phosphorylated by a F10-independent mechanism.

The protein localises to the host cytoplasm. Its function is as follows. Required for viral crescent formation early during virus morphogenesis. This chain is Protein A11 homolog, found in Fowlpox virus (strain NVSL) (FPV).